We begin with the raw amino-acid sequence, 149 residues long: Large ribosomal subunit protein uL13 (149 aa).

It belongs to the universal ribosomal protein uL13 family. In terms of assembly, part of the 50S ribosomal subunit.

Functionally, this protein is one of the early assembly proteins of the 50S ribosomal subunit, although it is not seen to bind rRNA by itself. It is important during the early stages of 50S assembly. This is Large ribosomal subunit protein uL13 from Gemmatimonas aurantiaca (strain DSM 14586 / JCM 11422 / NBRC 100505 / T-27).